Consider the following 304-residue polypeptide: Nicotinamide/nicotinic acid mononucleotide adenylyltransferase 2 (304 aa).

NAD(+) is bound by residues serine 16 and phenylalanine 17. Histidine 24 is a binding site for ATP. NAD(+) is bound by residues tryptophan 92 and threonine 95. 2 S-palmitoyl cysteine lipidation sites follow: cysteine 161 and cysteine 162. NAD(+)-binding residues include glycine 197, aspartate 199, leucine 209, tryptophan 210, and arginine 229. Residue 268–271 (TKSR) participates in ATP binding.

Belongs to the eukaryotic NMN adenylyltransferase family. As to quaternary structure, monomer. Mg(2+) is required as a cofactor.

It localises to the golgi apparatus membrane. It is found in the cytoplasmic vesicle membrane. The protein localises to the cytoplasm. Its subcellular location is the cell projection. The protein resides in the axon. The catalysed reaction is beta-nicotinamide D-ribonucleotide + ATP + H(+) = diphosphate + NAD(+). It carries out the reaction nicotinate beta-D-ribonucleotide + ATP + H(+) = deamido-NAD(+) + diphosphate. It functions in the pathway cofactor biosynthesis; NAD(+) biosynthesis; NAD(+) from nicotinamide D-ribonucleotide: step 1/1. Its pathway is cofactor biosynthesis; NAD(+) biosynthesis; deamido-NAD(+) from nicotinate D-ribonucleotide: step 1/1. Its function is as follows. Nicotinamide/nicotinate-nucleotide adenylyltransferase that acts as an axon maintenance factor. Axon survival factor required for the maintenance of healthy axons: acts by delaying Wallerian axon degeneration, an evolutionarily conserved process that drives the loss of damaged axons. Catalyzes the formation of NAD(+) from nicotinamide mononucleotide (NMN) and ATP. Can also use the deamidated form; nicotinic acid mononucleotide (NaMN) as substrate but with a lower efficiency. Also catalyzes the reverse reaction, i.e. the pyrophosphorolytic cleavage of NAD(+). For the pyrophosphorolytic activity prefers NAD(+), NADH and NaAD as substrates and degrades nicotinic acid adenine dinucleotide phosphate (NHD) less effectively. Also acts as an activator of ADP-ribosylation by supporting the catalytic activity of PARP16 and promoting mono-ADP-ribosylation of ribosomes by PARP16. May be involved in the maintenance of axonal integrity. This is Nicotinamide/nicotinic acid mononucleotide adenylyltransferase 2 (nmnat2) from Danio rerio (Zebrafish).